Reading from the N-terminus, the 466-residue chain is MSLNLSRLSLLSSPRISISTHAPRKGYVCCSMKSYRLSELSSSQVDSLKSRPRIDFSSIFATVNPIIDAVRSNGDNAVKEYTERFDKVQLNKVVEDMSELSVPELDSNVKEAFDVAYDNIYAFHLAQKSTEKSVENMKGVRCKRVSRSIGSVGLYVPGGTAVLPSTALMLAIPAQIAGCKTVVLATPPSKDGSICKEVLYCAKRAGVTHILKAGGAQAIAAMAWGTDSCPKVEKIFGPGNQYVTAAKMILQNSEAMVSIDMPAGPSEVLVIADEHASPVYIAADLLSQAEHGPDSQVVLVVVGDSVDLNAIEEEIAKQCKSLPRGEFASKALSHSFTVFARDMIEAISFSNLYAPEHLIINVKDAEKWEGLIENAGSVFIGPWTPESVGDYASGTNHVLPTYGYARMYSGVSLDSFLKFMTVQSLTEEGLRNLGPYVATMAEIEGLDAHKRAVTLRLKDIEAKQLA.

The N-terminal 30 residues, 1 to 30 (MSLNLSRLSLLSSPRISISTHAPRKGYVCC), are a transit peptide targeting the chloroplast. NAD(+) contacts are provided by Tyr155, Gln217, and Asn240. Ser266, Gln288, and His291 together coordinate substrate. Zn(2+)-binding residues include Gln288 and His291. Residues Glu356 and His357 each act as proton acceptor in the active site. Substrate is bound by residues His357, Asp390, Glu444, and His449. Asp390 contributes to the Zn(2+) binding site. His449 contacts Zn(2+).

The protein belongs to the histidinol dehydrogenase family. Requires Zn(2+) as cofactor.

It localises to the plastid. The protein resides in the chloroplast. The catalysed reaction is L-histidinol + 2 NAD(+) + H2O = L-histidine + 2 NADH + 3 H(+). It participates in amino-acid biosynthesis; L-histidine biosynthesis; L-histidine from 5-phospho-alpha-D-ribose 1-diphosphate: step 9/9. Its function is as follows. Catalyzes the sequential NAD-dependent oxidations of L-histidinol to L-histidinaldehyde and then to L-histidine. The sequence is that of Histidinol dehydrogenase, chloroplastic (HISN8) from Arabidopsis thaliana (Mouse-ear cress).